A 201-amino-acid polypeptide reads, in one-letter code: Small ribosomal subunit protein uS4 (201 aa).

In terms of domain architecture, S4 RNA-binding spans 91 to 157; sequence SRLDNVIYRA…VPFQIARETV (67 aa).

It belongs to the universal ribosomal protein uS4 family. Part of the 30S ribosomal subunit. Contacts protein S5. The interaction surface between S4 and S5 is involved in control of translational fidelity.

In terms of biological role, one of the primary rRNA binding proteins, it binds directly to 16S rRNA where it nucleates assembly of the body of the 30S subunit. Its function is as follows. With S5 and S12 plays an important role in translational accuracy. The protein is Small ribosomal subunit protein uS4 of Mycobacterium leprae (strain Br4923).